The primary structure comprises 359 residues: Protein FLX-like 2 (359 aa).

Basic residues predominate over residues 1-16; that stretch reads MESKGRIHPSHHHMRR. The disordered stretch occupies residues 1–27; it reads MESKGRIHPSHHHMRRPLPGPGGCIAH. Residues 83–236 adopt a coiled-coil conformation; it reads HGSLRQELAA…EKLQAQLMNN (154 aa). Residues 303–359 form a disordered region; sequence TQPGYFPQRPGYNFPRGPPGSYDPTTRLPTGPYGAPFPPGPSNNTPYAGTHGNPSRR.

This sequence belongs to the FLX family. Interacts with FRI.

Its function is as follows. Has no transcriptional activation activity. This chain is Protein FLX-like 2 (FLXL2), found in Arabidopsis thaliana (Mouse-ear cress).